A 373-amino-acid chain; its full sequence is MQFFTALAAVGALVAPALALPTQVPANQSLIDVQLSATGNSMIKAVITNKGTRALNLLKFNTIMDENPTAKVMVFDKNGAEVEFTGMLPRYDMNSLSTDYFATLAPQASVEHSFDIAATHNIKESGKYTLSAHGLIPTAEEHGTTITGQAFYESNTLEMEIDASKAAMVPRAFEELDAHIVGTIDKRSGIVTSSCDASQLRIVKQALANSRMLALNAARAASSNPSKVREYFGSSDSSIMQKVASRFQSVARESTASGGQTTYHCTDNRGSCKPGVLAYTLPSTNTVYNCPSYYREPSLTKRCHAQDQATTTLHELTHNPVVVSPFCKDLGYGYRLATGLPTSKAIQNADNYALFANEESSPVFFVPVFYSNG.

The N-terminal stretch at 1–19 (MQFFTALAAVGALVAPALA) is a signal peptide. The propeptide occupies 20–187 (LPTQVPANQS…AHIVGTIDKR (168 aa)). 2 disulfides stabilise this stretch: Cys195–Cys265 and Cys272–Cys290. Zn(2+) is bound at residue His314. Glu315 is a catalytic residue. Residues His318 and Asp329 each coordinate Zn(2+).

The protein belongs to the peptidase M35 family. Zn(2+) serves as cofactor.

It is found in the secreted. The catalysed reaction is Preferential cleavage of bonds with hydrophobic residues in P1'. Also 3-Asn-|-Gln-4 and 8-Gly-|-Ser-9 bonds in insulin B chain.. Its function is as follows. Probable secreted metalloprotease that shows high activities on basic nuclear substrates such as histone and protamine. May be involved in virulence. This chain is Probable neutral protease 2 homolog MCYG_05201, found in Arthroderma otae (strain ATCC MYA-4605 / CBS 113480) (Microsporum canis).